A 263-amino-acid polypeptide reads, in one-letter code: Tryptophan synthase alpha chain (263 aa).

Catalysis depends on proton acceptor residues glutamate 49 and aspartate 60.

Belongs to the TrpA family. As to quaternary structure, tetramer of two alpha and two beta chains.

It carries out the reaction (1S,2R)-1-C-(indol-3-yl)glycerol 3-phosphate + L-serine = D-glyceraldehyde 3-phosphate + L-tryptophan + H2O. The protein operates within amino-acid biosynthesis; L-tryptophan biosynthesis; L-tryptophan from chorismate: step 5/5. Its function is as follows. The alpha subunit is responsible for the aldol cleavage of indoleglycerol phosphate to indole and glyceraldehyde 3-phosphate. The sequence is that of Tryptophan synthase alpha chain from Cereibacter sphaeroides (strain ATCC 17025 / ATH 2.4.3) (Rhodobacter sphaeroides).